A 458-amino-acid polypeptide reads, in one-letter code: Cysteine--tRNA ligase (458 aa).

A Zn(2+)-binding site is contributed by C33. The short motif at 35–45 (PTVYDFAHIGN) is the 'HIGH' region element. Zn(2+) is bound by residues C221, H246, and E250. Positions 279-283 (KMSKS) match the 'KMSKS' region motif. Residue K282 participates in ATP binding.

This sequence belongs to the class-I aminoacyl-tRNA synthetase family. In terms of assembly, monomer. Zn(2+) serves as cofactor.

It localises to the cytoplasm. It catalyses the reaction tRNA(Cys) + L-cysteine + ATP = L-cysteinyl-tRNA(Cys) + AMP + diphosphate. The sequence is that of Cysteine--tRNA ligase from Rhizobium etli (strain ATCC 51251 / DSM 11541 / JCM 21823 / NBRC 15573 / CFN 42).